Reading from the N-terminus, the 247-residue chain is Small ribosomal subunit protein uS3 (247 aa).

One can recognise a KH type-2 domain in the interval 51–119 (VAKRDKRPAG…ELHLNIVEIR (69 aa)). Residues 224-233 (PSAHDRRQQE) show a composition bias toward basic and acidic residues. The tract at residues 224–247 (PSAHDRRQQELQESGGASRPRRDR) is disordered.

The protein belongs to the universal ribosomal protein uS3 family. As to quaternary structure, part of the 30S ribosomal subunit. Forms a tight complex with proteins S10 and S14.

Functionally, binds the lower part of the 30S subunit head. Binds mRNA in the 70S ribosome, positioning it for translation. In Jannaschia sp. (strain CCS1), this protein is Small ribosomal subunit protein uS3.